The sequence spans 497 residues: Cysteine-rich secretory protein LCCL domain-containing 2 (497 aa).

The signal sequence occupies residues 1-22 (MSCVLGGVIPLGLLFLVCGSQG). Residue N27 is glycosylated (N-linked (GlcNAc...) asparagine). The 139-residue stretch at 62–200 (LHNKLRGQVQ…ENAVYFVCNY (139 aa)) folds into the SCP domain. 2 LCCL domains span residues 284–379 (MTQV…SSSF) and 385–488 (KVQD…RDGK). Intrachain disulfides connect C290/C308, C312/C332, C391/C413, and C417/C440.

This sequence belongs to the CRISP family. In terms of assembly, binds to heparin, dermatan sulfate and chondroitin sulfate.

The protein resides in the secreted. Its function is as follows. Promotes matrix assembly. This chain is Cysteine-rich secretory protein LCCL domain-containing 2 (CRISPLD2), found in Homo sapiens (Human).